A 190-amino-acid polypeptide reads, in one-letter code: Threonylcarbamoyl-AMP synthase (190 aa).

Residues 7–190 (GDAIAAAIDV…ALTGELFRQG (184 aa)) form the YrdC-like domain.

The protein belongs to the SUA5 family. TsaC subfamily.

The protein resides in the cytoplasm. The enzyme catalyses L-threonine + hydrogencarbonate + ATP = L-threonylcarbamoyladenylate + diphosphate + H2O. Functionally, required for the formation of a threonylcarbamoyl group on adenosine at position 37 (t(6)A37) in tRNAs that read codons beginning with adenine. Catalyzes the conversion of L-threonine, HCO(3)(-)/CO(2) and ATP to give threonylcarbamoyl-AMP (TC-AMP) as the acyladenylate intermediate, with the release of diphosphate. The polypeptide is Threonylcarbamoyl-AMP synthase (Escherichia coli O157:H7).